A 354-amino-acid chain; its full sequence is Arginase-2, mitochondrial (354 aa).

The transit peptide at 1 to 22 (MFLRSSVSRLLHGQIPCALTRS) directs the protein to the mitochondrion. Histidine 120, aspartate 143, histidine 145, and aspartate 147 together coordinate Mn(2+). Residues 145–149 (HADIN), 156–158 (SGN), and glutamate 202 contribute to the substrate site. 2 residues coordinate Mn(2+): aspartate 251 and aspartate 253. The substrate site is built by threonine 265 and glutamate 296.

It belongs to the arginase family. Homotrimer. Mn(2+) is required as a cofactor.

The protein resides in the mitochondrion. The enzyme catalyses L-arginine + H2O = urea + L-ornithine. The protein operates within nitrogen metabolism; urea cycle; L-ornithine and urea from L-arginine: step 1/1. Its function is as follows. May play a role in the regulation of extra-urea cycle arginine metabolism and also in down-regulation of nitric oxide synthesis. Extrahepatic arginase functions to regulate L-arginine bioavailability to nitric oxid synthase (NOS). Arginine metabolism is a critical regulator of innate and adaptive immune responses. Seems to be involved in negative regulation of the survival capacity of activated T cells. May suppress inflammation-related signaling in asthmatic airway epithelium. May play a role in promoting prenatal immune suppression. Regulates RPS6KB1 signaling, which promotes endothelial cell senescence and inflammation and implicates NOS3/eNOS dysfunction. Can inhibit endothelial autophagy independently of its enzymatic activity implicating mTORC2 signaling. Involved in vascular smooth muscle cell senescence and apoptosis independently of its enzymatic activity. The polypeptide is Arginase-2, mitochondrial (Arg2) (Rattus norvegicus (Rat)).